A 495-amino-acid chain; its full sequence is Trimethylamine methyltransferase MttB1 (495 aa).

Residue O334 is a non-standard amino acid, pyrrolysine.

Belongs to the trimethylamine methyltransferase family. Can form a complex with MttC.

It carries out the reaction Co(I)-[trimethylamine-specific corrinoid protein] + trimethylamine + H(+) = methyl-Co(III)-[trimethylamine-specific corrinoid protein] + dimethylamine. Its pathway is one-carbon metabolism; methanogenesis from trimethylamine. Functionally, catalyzes the transfer of a methyl group from trimethylamine to the corrinoid cofactor of MttC. The chain is Trimethylamine methyltransferase MttB1 (mttB1) from Methanosarcina acetivorans (strain ATCC 35395 / DSM 2834 / JCM 12185 / C2A).